We begin with the raw amino-acid sequence, 244 residues long: Flagellar L-ring protein (244 aa).

Positions 1 to 18 (MNMRVFIFLIFAAASVSA) are cleaved as a signal peptide. Cys19 carries N-palmitoyl cysteine lipidation. A lipid anchor (S-diacylglycerol cysteine) is attached at Cys19.

Belongs to the FlgH family. As to quaternary structure, the basal body constitutes a major portion of the flagellar organelle and consists of four rings (L,P,S, and M) mounted on a central rod.

The protein localises to the cell outer membrane. Its subcellular location is the bacterial flagellum basal body. Assembles around the rod to form the L-ring and probably protects the motor/basal body from shearing forces during rotation. The chain is Flagellar L-ring protein from Jannaschia sp. (strain CCS1).